Here is a 156-residue protein sequence, read N- to C-terminus: MSRRHRAEKREINPDPKFGDVVITKFMNAIMFDGKKSVAERIVYGALDVVEGKVKTDPVALFHQALENVAPHIEVRSRRVGGATYQVPVDVRPDRRQALAIRWLIKAARGRNETAMIDRLSGELVDAANNRGTAVKKREDVHRMAEANRAFSHYRW.

This sequence belongs to the universal ribosomal protein uS7 family. As to quaternary structure, part of the 30S ribosomal subunit. Contacts proteins S9 and S11.

Functionally, one of the primary rRNA binding proteins, it binds directly to 16S rRNA where it nucleates assembly of the head domain of the 30S subunit. Is located at the subunit interface close to the decoding center, probably blocks exit of the E-site tRNA. This Bartonella bacilliformis (strain ATCC 35685 / KC583 / Herrer 020/F12,63) protein is Small ribosomal subunit protein uS7A/uS7B.